The sequence spans 883 residues: MSSTPKQTTGDALAGHTPMMQQYLRLKAEAGPLLLFYRMGDFYEMFYEDAERAARLLNLTLTKRGNSNGTPIPMAGIPVHAMEQYLARLVALGESVAICEQIGDPAAAKGPVERRIVRIVTPGTLTDEALLPAKADRALAAVCVTGKREPRAGLAWLNLASGAFHVTECAPAQLESELHRIAPAELIQAESAELHMAFEGARTRVPDWHFEADGARAQLLAHFKTDSLGGFDVEDMPAAVCAAGALLRYAARTQSQALAHVQTIAAERSGQYVLLDPVTRRNLELTQTLSGEESPTLFSLLDGCRTPMGSRLLRRWLHHPLRENEPVLARQHAIATMLTARQEGEQTFAAAGLLETLRDALNAFPDIERIAARVALRSVRPRELASLRDALAALPALHASLTPLSGSPRARELAAQLAMPPDIGELLARAVASEPAVAIRDGGVIAAGFDSELDELRALATDGGDFLVQLEARERERTGIGNLRVEFNRVHGFYIEVTKGQTDKVPEDYRRRQTLKNAERYITPELKTWEDRVLSAQDRSLAREKWLYEQLLDALAQYVRPLSQCASALAELDTLAALAEHARRHDWVAPELIDGAEIDIEAGRHPVVERAIERFTPNGCRLDQTRRMLLITGPNMGGKSTYMRQVALIALLARTGSFVPATRARVGRLDRIFTRIGAADDLAGGRSTFMMEMTEAAAILAASTPASLVLMDEIGRGTSTYDGLALAWAIAYRLLTHNRALTLFATHYFELTRLPAEQPTAANVHLAAAESAGGIVFLHEVREGPASRSYGIQVAQRAGVPAAVIRQASRELERLEAQGAPTPQLGLFAAALDADVQSQAMTEQAEDAAALAQLRDQLVAIDPDSLTPREALDALYRLKQHLT.

633–640 (GPNMGGKS) lines the ATP pocket.

This sequence belongs to the DNA mismatch repair MutS family.

Its function is as follows. This protein is involved in the repair of mismatches in DNA. It is possible that it carries out the mismatch recognition step. This protein has a weak ATPase activity. The protein is DNA mismatch repair protein MutS of Bordetella pertussis (strain Tohama I / ATCC BAA-589 / NCTC 13251).